A 610-amino-acid chain; its full sequence is Manganese lipoxygenase (610 aa).

Residues 1–16 (MVALLIFLGIFTCVET) form the signal peptide. Residues 47–610 (FTLPNEDDEI…PGVIPFYLSV (564 aa)) enclose the Lipoxygenase domain. Residues Asn-157 and Asn-259 are each glycosylated (N-linked (GlcNAc...) asparagine). Mn(2+)-binding residues include His-290 and His-295. Asn-386 carries an N-linked (GlcNAc...) asparagine glycan. The Mn(2+) site is built by His-475 and Asn-479. The N-linked (GlcNAc...) asparagine glycan is linked to Asn-540. Val-610 lines the Mn(2+) pocket.

It belongs to the lipoxygenase family. Manganese lipoxygenase subfamily. It depends on Mn(2+) as a cofactor. N- and O-glycosylated.

The protein localises to the secreted. It carries out the reaction (9Z,12Z)-octadecadienoate + O2 = (11S)-hydroperoxy-(9Z,12Z)-octadecadienoate. The catalysed reaction is (9Z,12Z)-octadecadienoate + O2 = (11R)-hydroperoxy-(9Z,12Z)-octadecadienoate. It catalyses the reaction (9Z,12Z)-octadecadienoate + O2 = (13S)-hydroperoxy-(9Z,11E)-octadecadienoate. The enzyme catalyses (9Z,12Z,15Z)-octadecatrienoate + O2 = (11S)-hydroperoxy-(9Z,12Z,15Z)-octadecatrienoate. Lipoxygenase that metabolizes linoleic and alpha-linolenic acids to 9-, 11- and 13-hydroperoxy fatty acids. Oxidizes linoleic acid to mainly 11R-, 13S- and racemic 9-HPODE, and alpha-linolenic acid to 11-HPOTrE. This is Manganese lipoxygenase from Fusarium oxysporum (strain Fo5176) (Fusarium vascular wilt).